The chain runs to 363 residues: Homeobox protein Hox-A2 (363 aa).

2 disordered regions span residues 23–133 and 183–216; these read TSFP…SRRL and MKHK…DEEK. Composition is skewed to polar residues over residues 31–46 and 55–78; these read TFQS…SHST and TIPS…NGTS. Residues 88–93 carry the Antp-type hexapeptide motif; sequence EYPWMK. The homeobox DNA-binding region spans 130 to 189; the sequence is SRRLRTAYTNTQLLELEKEFHFNKYLCRPRRVEIAALLDLTERQVKVWFQNRRMKHKRQT.

The protein belongs to the Antp homeobox family. Proboscipedia subfamily.

It localises to the nucleus. Functionally, sequence-specific transcription factor which is part of a developmental regulatory system that provides cells with specific positional identities on the anterior-posterior axis. This Heterodontus francisci (Horn shark) protein is Homeobox protein Hox-A2 (HOXA2).